The sequence spans 717 residues: MREGAFDASRKKGGTQRPSSLSTAQPPSDSRPPSSSSPPSSSSSSSSASSSSPSHPPRPFPSASSPWFPTCEASAEKMDRAQTDSRQEPILRPVAAGEEASPAFVPWQTRAFSPIARGSLRGSVLTLASSCLGAGVLATPYAMQETGLLIGLSLLCMHTFVSFFTTYILMASSKFFGSSTYAELAHRASPRLPRRAVDAIIVLNGLGVCLSFLVFLGDFLPASLENLQLFPRATDHRAALLCASMVVIFPLSVQPRLSALRHFAFFPVCALLFSLSCVVYRSLHLLREQTAPIRLVNLNWNFFKSFNVFLFAFMQHINVCPIGRELQNPTDPRVYKVSLRAALLEYCLYTPIATLGYLSFRGVTKQNFMLNYSSEDQLMHVCTLLLSFSMVLGVPLTLIPTVDSMFSLLRSLAPAPRRAARAALGEAPRRRSLVAPLLHAERTDGLVRVTVSLAFEKEGGLGDAEYGGAEAGEATRGCGEGVESPGEVQPEQADAGARNRDRSRLHADSERSAGDREGSQAEEEREEERSGEERSVVTATQASRCEGSSSASSRSVDSGSGGCQDACESRETRTRFLALEEEPSGDREAREEREEREEREGQGRRGGELLLLMGRVLENRKVCVAACLLPVLLLALVLDKAADVVGLLGGFFSTLLMSALPSIIFYAGIGNLYYRPFTRSLLMVFLLGVTCVGAFSSVIIILQTFNVCCQVPRSVLH.

The segment covering 1 to 10 has biased composition (basic and acidic residues); the sequence is MREGAFDASR. The disordered stretch occupies residues 1–88; sequence MREGAFDASR…DRAQTDSRQE (88 aa). The segment covering 16-25 has biased composition (polar residues); it reads QRPSSLSTAQ. Residues 26 to 53 are compositionally biased toward low complexity; sequence PPSDSRPPSSSSPPSSSSSSSSASSSSP. The segment covering 74–88 has biased composition (basic and acidic residues); sequence SAEKMDRAQTDSRQE. Helical transmembrane passes span 124 to 143, 149 to 170, 196 to 216, 236 to 253, 265 to 283, 303 to 320, 341 to 358, and 378 to 402; these read VLTLASSCLGAGVLATPYAM, LIGLSLLCMHTFVSFFTTYILM, AVDAIIVLNGLGVCLSFLVFL, HRAALLCASMVVIFPLSV, FFPVCALLFSLSCVVYRSL, FKSFNVFLFAFMQHINVC, AALLEYCLYTPIATLGYL, and LMHVCTLLLSFSMVLGVPLTLIPTV. The tract at residues 462-602 is disordered; the sequence is GDAEYGGAEA…REEREEREGQ (141 aa). Residues 463 to 477 are compositionally biased toward low complexity; that stretch reads DAEYGGAEAGEATRG. Basic and acidic residues predominate over residues 497–519; the sequence is ARNRDRSRLHADSERSAGDREGS. The segment covering 547-558 has biased composition (low complexity); it reads GSSSASSRSVDS. Over residues 584–602 the composition is skewed to basic and acidic residues; it reads SGDREAREEREEREEREGQ. 3 helical membrane-spanning segments follow: residues 622–638, 644–669, and 681–702; these read VCVAACLLPVLLLALVL, VVGLLGGFFSTLLMSALPSIIFYAGI, and LLMVFLLGVTCVGAFSSVIIIL.

This sequence belongs to the amino acid/polyamine transporter 2 family.

It is found in the vacuole membrane. Its function is as follows. Putative amino acid transporter. Probably transports arginine. Involved in maintaining the osmotic homeostasis of the digestive vacuole. Required for extracellular parasite survival and bradyzoite differentiation. The sequence is that of Putative amino acid transporter AAT1 from Toxoplasma gondii (strain ATCC 50611 / Me49).